An 822-amino-acid chain; its full sequence is Valine--tRNA ligase (822 aa).

The 'HIGH' region motif lies at 41 to 51 (PNVTGQLHLGH). A 'KMSKS' region motif is present at residues 511–515 (KMSKS). K514 serves as a coordination point for ATP. The stretch at 765-822 (EQKGRELKEIQFLKSEILRAEKILTNKGFLEKAPREKIDLERTKLEKLKEKLVFYEKK) forms a coiled coil.

This sequence belongs to the class-I aminoacyl-tRNA synthetase family. ValS type 1 subfamily. Monomer.

It localises to the cytoplasm. It carries out the reaction tRNA(Val) + L-valine + ATP = L-valyl-tRNA(Val) + AMP + diphosphate. Its function is as follows. Catalyzes the attachment of valine to tRNA(Val). As ValRS can inadvertently accommodate and process structurally similar amino acids such as threonine, to avoid such errors, it has a 'posttransfer' editing activity that hydrolyzes mischarged Thr-tRNA(Val) in a tRNA-dependent manner. The sequence is that of Valine--tRNA ligase from Mesomycoplasma hyopneumoniae (strain J / ATCC 25934 / NCTC 10110) (Mycoplasma hyopneumoniae).